The primary structure comprises 143 residues: Nucleoside diphosphate kinase (143 aa).

Lys-11, Phe-59, Arg-87, Thr-93, Arg-104, and Asn-114 together coordinate ATP. Catalysis depends on His-117, which acts as the Pros-phosphohistidine intermediate.

It belongs to the NDK family. Homotetramer. Requires Mg(2+) as cofactor.

The protein localises to the cytoplasm. It carries out the reaction a 2'-deoxyribonucleoside 5'-diphosphate + ATP = a 2'-deoxyribonucleoside 5'-triphosphate + ADP. The catalysed reaction is a ribonucleoside 5'-diphosphate + ATP = a ribonucleoside 5'-triphosphate + ADP. Functionally, major role in the synthesis of nucleoside triphosphates other than ATP. The ATP gamma phosphate is transferred to the NDP beta phosphate via a ping-pong mechanism, using a phosphorylated active-site intermediate. This Citrobacter koseri (strain ATCC BAA-895 / CDC 4225-83 / SGSC4696) protein is Nucleoside diphosphate kinase.